A 382-amino-acid polypeptide reads, in one-letter code: F-box/LRR-repeat/kelch-repeat protein At1g09650 (382 aa).

The F-box domain occupies cysteine 7–arginine 52. One copy of the LRR 1 repeat lies at isoleucine 78–glutamate 101. Residues proline 180 to valine 227 form a Kelch 1 repeat. One copy of the LRR 2 repeat lies at glutamate 239–asparagine 262. The stretch at methionine 270–valine 319 is one Kelch 2 repeat.

This chain is F-box/LRR-repeat/kelch-repeat protein At1g09650, found in Arabidopsis thaliana (Mouse-ear cress).